The following is a 751-amino-acid chain: Catalase-peroxidase (751 aa).

The tract at residues 1-21 (MSNESKCPFHQTAGGGTTNRD) is disordered. The segment at residues 90 to 244 (WHSAGTYRIG…LAAVQMGLIY (155 aa)) is a cross-link (tryptophyl-tyrosyl-methioninium (Trp-Tyr) (with M-270)). The active-site Proton acceptor is the H91. Residues 195–227 (YGKDQVKAQPPGQGDLVAEPAKHGEEQNRDLSA) form a disordered region. Basic and acidic residues predominate over residues 214-227 (PAKHGEEQNRDLSA). The segment at residues 244-270 (YVNPEGPEGNPDPVASGKDIRETFGRM) is a cross-link (tryptophyl-tyrosyl-methioninium (Tyr-Met) (with W-90)). A heme b-binding site is contributed by H285. Positions 365-387 (AHQWRPKEGKGAGTVPDAHDPGK) are disordered.

It belongs to the peroxidase family. Peroxidase/catalase subfamily. Homodimer or homotetramer. Heme b serves as cofactor. Post-translationally, formation of the three residue Trp-Tyr-Met cross-link is important for the catalase, but not the peroxidase activity of the enzyme.

The catalysed reaction is H2O2 + AH2 = A + 2 H2O. It catalyses the reaction 2 H2O2 = O2 + 2 H2O. Its function is as follows. Bifunctional enzyme with both catalase and broad-spectrum peroxidase activity. This is Catalase-peroxidase from Pseudomonas putida (strain ATCC 700007 / DSM 6899 / JCM 31910 / BCRC 17059 / LMG 24140 / F1).